The following is a 1067-amino-acid chain: Cadmium/zinc-transporting ATPase HMA2 (1067 aa).

The HMA domain occupies 9–75 (QKSYFDVLGI…ALNQARLEAS (67 aa)). A run of 8 helical transmembrane segments spans residues 94 to 114 (YVLL…WHPL), 117 to 137 (FALV…IAAI), 140 to 160 (LTLD…ALKD), 162 to 182 (SEAG…TRAS), 313 to 333 (YTPA…IAKA), 342 to 362 (LALV…TPIA), 649 to 669 (IIVN…LAFA), and 673 to 693 (LIWA…MYSM). 3 disordered regions span residues 711-739 (HHGS…HHCS), 760-790 (HDHH…SHGH), and 960-996 (NDTH…GHHP). Residues 724–735 (HGSHAKKNHGVS) are compositionally biased toward basic residues. 2 stretches are compositionally biased toward basic and acidic residues: residues 760-774 (HDHH…EPAH) and 975-996 (SSDH…GHHP).

Belongs to the cation transport ATPase (P-type) (TC 3.A.3) family. Type IB subfamily. In roots, localizes at the pericycle cells. In nodes, localizes in the phloem parenchyma and companion cells of both enlarged and diffuse vascular bundles.

Its subcellular location is the cell membrane. It catalyses the reaction Zn(2+)(in) + ATP + H2O = Zn(2+)(out) + ADP + phosphate + H(+). The catalysed reaction is Cd(2+)(in) + ATP + H2O = Cd(2+)(out) + ADP + phosphate + H(+). Zinc/cadmium transporter that plays an essential role in promoting translocation of zinc and cadmium from roots to shoots. May control cadmium loading into xylem. In roots, transports zinc and cadmium from the apoplast to the symplast to facilitate translocation via the phloem. In nodes, functions to load zinc and cadmium to the phloem for the preferential distribution to the upper nodes and panicles. The protein is Cadmium/zinc-transporting ATPase HMA2 of Oryza sativa subsp. japonica (Rice).